Here is a 288-residue protein sequence, read N- to C-terminus: 4-hydroxy-tetrahydrodipicolinate synthase (288 aa).

Thr-47 contacts pyruvate. Tyr-136 acts as the Proton donor/acceptor in catalysis. Residue Lys-164 is the Schiff-base intermediate with substrate of the active site. Ile-204 serves as a coordination point for pyruvate.

Belongs to the DapA family. As to quaternary structure, homotetramer; dimer of dimers.

It is found in the cytoplasm. It carries out the reaction L-aspartate 4-semialdehyde + pyruvate = (2S,4S)-4-hydroxy-2,3,4,5-tetrahydrodipicolinate + H2O + H(+). The protein operates within amino-acid biosynthesis; L-lysine biosynthesis via DAP pathway; (S)-tetrahydrodipicolinate from L-aspartate: step 3/4. In terms of biological role, catalyzes the condensation of (S)-aspartate-beta-semialdehyde [(S)-ASA] and pyruvate to 4-hydroxy-tetrahydrodipicolinate (HTPA). This is 4-hydroxy-tetrahydrodipicolinate synthase from Leuconostoc mesenteroides subsp. mesenteroides (strain ATCC 8293 / DSM 20343 / BCRC 11652 / CCM 1803 / JCM 6124 / NCDO 523 / NBRC 100496 / NCIMB 8023 / NCTC 12954 / NRRL B-1118 / 37Y).